A 163-amino-acid polypeptide reads, in one-letter code: Transcriptional repressor NrdR (163 aa).

A zinc finger spans residues 3–34 (CPFCRHDDSRVVDSRTTDDGSSIRRRRQCPNC). Positions 46-136 (LSVIKRSGAP…VYQAFDSLAD (91 aa)) constitute an ATP-cone domain.

The protein belongs to the NrdR family. Requires Zn(2+) as cofactor.

Functionally, negatively regulates transcription of bacterial ribonucleotide reductase nrd genes and operons by binding to NrdR-boxes. The polypeptide is Transcriptional repressor NrdR (Kineococcus radiotolerans (strain ATCC BAA-149 / DSM 14245 / SRS30216)).